The chain runs to 103 residues: MFTAKLIKGKTYNVMGITFRAGVSQTVPKKLYEYLNENPYFILTQELNNQKDDPINYTESELKGMNKAEHESIISNLGRNPSDFKNADERIAYILKQIDNKGE.

This is an uncharacterized protein from Bacillus subtilis (strain 168).